The sequence spans 347 residues: Phenylalanine--tRNA ligase alpha subunit (347 aa).

Position 265 (E265) interacts with Mg(2+).

The protein belongs to the class-II aminoacyl-tRNA synthetase family. Phe-tRNA synthetase alpha subunit type 1 subfamily. Tetramer of two alpha and two beta subunits. Requires Mg(2+) as cofactor.

It localises to the cytoplasm. It carries out the reaction tRNA(Phe) + L-phenylalanine + ATP = L-phenylalanyl-tRNA(Phe) + AMP + diphosphate + H(+). This Wolbachia pipientis wMel protein is Phenylalanine--tRNA ligase alpha subunit.